Consider the following 315-residue polypeptide: Methionyl-tRNA formyltransferase (315 aa).

(6S)-5,6,7,8-tetrahydrofolate is bound at residue 112-115; it reads SLLP.

The protein belongs to the Fmt family.

The catalysed reaction is L-methionyl-tRNA(fMet) + (6R)-10-formyltetrahydrofolate = N-formyl-L-methionyl-tRNA(fMet) + (6S)-5,6,7,8-tetrahydrofolate + H(+). In terms of biological role, attaches a formyl group to the free amino group of methionyl-tRNA(fMet). The formyl group appears to play a dual role in the initiator identity of N-formylmethionyl-tRNA by promoting its recognition by IF2 and preventing the misappropriation of this tRNA by the elongation apparatus. The chain is Methionyl-tRNA formyltransferase from Rhizobium rhizogenes (strain K84 / ATCC BAA-868) (Agrobacterium radiobacter).